The chain runs to 206 residues: Pyridoxine/pyridoxamine 5'-phosphate oxidase (206 aa).

Residues 53 to 58, 68 to 69, K75, and Q97 each bind FMN; these read RMVLLK and YT. K58 lines the substrate pocket. Residues Y115, R119, and S123 each coordinate substrate. FMN is bound by residues 132-133 and W177; that span reads QS. A substrate-binding site is contributed by 183 to 185; the sequence is RLH. An FMN-binding site is contributed by R187.

This sequence belongs to the pyridoxamine 5'-phosphate oxidase family. Homodimer. FMN serves as cofactor.

The catalysed reaction is pyridoxamine 5'-phosphate + O2 + H2O = pyridoxal 5'-phosphate + H2O2 + NH4(+). The enzyme catalyses pyridoxine 5'-phosphate + O2 = pyridoxal 5'-phosphate + H2O2. It functions in the pathway cofactor metabolism; pyridoxal 5'-phosphate salvage; pyridoxal 5'-phosphate from pyridoxamine 5'-phosphate: step 1/1. The protein operates within cofactor metabolism; pyridoxal 5'-phosphate salvage; pyridoxal 5'-phosphate from pyridoxine 5'-phosphate: step 1/1. In terms of biological role, catalyzes the oxidation of either pyridoxine 5'-phosphate (PNP) or pyridoxamine 5'-phosphate (PMP) into pyridoxal 5'-phosphate (PLP). This is Pyridoxine/pyridoxamine 5'-phosphate oxidase from Rhizobium etli (strain ATCC 51251 / DSM 11541 / JCM 21823 / NBRC 15573 / CFN 42).